We begin with the raw amino-acid sequence, 543 residues long: Carboxypeptidase Y homolog A (543 aa).

The signal sequence occupies residues methionine 1 to valine 17. A propeptide spanning residues glycine 18–lysine 128 is cleaved from the precursor. 2 N-linked (GlcNAc...) asparagine glycosylation sites follow: asparagine 122 and asparagine 213. 5 cysteine pairs are disulfide-bonded: cysteine 182-cysteine 421, cysteine 316-cysteine 330, cysteine 340-cysteine 363, cysteine 347-cysteine 356, and cysteine 385-cysteine 391. Serine 269 is a catalytic residue. Residue aspartate 460 is part of the active site. The N-linked (GlcNAc...) asparagine glycan is linked to asparagine 508. Residue histidine 519 is part of the active site.

This sequence belongs to the peptidase S10 family.

Its subcellular location is the vacuole. It carries out the reaction Release of a C-terminal amino acid with broad specificity.. In terms of biological role, vacuolar carboxypeptidase involved in degradation of small peptides. Digests preferentially peptides containing an aliphatic or hydrophobic residue in P1' position, as well as methionine, leucine or phenylalanine in P1 position of ester substrate. In Leptosphaeria maculans (strain JN3 / isolate v23.1.3 / race Av1-4-5-6-7-8) (Blackleg fungus), this protein is Carboxypeptidase Y homolog A (CPYA).